The primary structure comprises 93 residues: MSEANVNTKKEKGARKTRTGIVVSDKMNKTIVVELEDRKQHALYGKIMRTNKKVKAHDENETAGIGDRVLIAETRPLSKDKHFRLVEIVEKAK.

Belongs to the universal ribosomal protein uS17 family. Part of the 30S ribosomal subunit.

Functionally, one of the primary rRNA binding proteins, it binds specifically to the 5'-end of 16S ribosomal RNA. The polypeptide is Small ribosomal subunit protein uS17 (Corynebacterium aurimucosum (strain ATCC 700975 / DSM 44827 / CIP 107346 / CN-1) (Corynebacterium nigricans)).